Consider the following 154-residue polypeptide: UPF0225 protein YpsIP31758_1970 (154 aa).

This sequence belongs to the UPF0225 family.

The chain is UPF0225 protein YpsIP31758_1970 from Yersinia pseudotuberculosis serotype O:1b (strain IP 31758).